The sequence spans 397 residues: MKPLSWSEAFGKGAGRIQASTIRELLKLTQRPGILSFAGGLPAPELFPKEEAAEAAARILREKGEVALQYSPTEGYAPLRAFVAEWIGVRPEEVLITTGSQQALDLVGKVFLDEGSPVLLEAPSYMGAIQAFRLQGPRFLTVPAGEEGPDLDALEEVLKRERPRFLYLIPSFQNPTGGLTPLPARKRLLQMVMERGLVVVEDDAYRELYFGEARLPSLFELAREAGYPGVIYLGSFSKVLSPGLRVAFAVAHPEALQKLVQAKQGADLHTPMLNQMLVHELLKEGFSERLERVRRVYREKAQAMLHALDREVPKEVRYTRPKGGMFVWMELPKGLSAEGLFRRALEENVAFVPGGPFFANGGGENTLRLSYATLDREGIAEGVRRLGRALKGLLALV.

Gly-40 is a binding site for substrate. Pyridoxal 5'-phosphate contacts are provided by residues Tyr-70, 100–101 (SQ), Asn-174, 202–205 (DDAY), 235–237 (SFS), and Arg-245. Asn-174 is a binding site for substrate. An N6-(pyridoxal phosphate)lysine modification is found at Lys-263. A substrate-binding site is contributed by Arg-368.

The protein belongs to the class-I pyridoxal-phosphate-dependent aminotransferase family. Homodimer. The cofactor is pyridoxal 5'-phosphate.

The enzyme catalyses L-2-aminoadipate + 2-oxoglutarate = 2-oxoadipate + L-glutamate. It functions in the pathway amino-acid biosynthesis; L-lysine biosynthesis via AAA pathway; L-alpha-aminoadipate from 2-oxoglutarate: step 5/5. In terms of biological role, catalyzes the transfer of an amino group between 2-oxoadipate (2-OA) and glutamate (Glu) to yield alpha-aminodipate (AAA). It can also transaminate glutamate, leucine, and aromatic amino acids. It also contributes in the biosynthesis of other amino acids such as leucine. The chain is 2-aminoadipate transaminase (lysN) from Thermus thermophilus (strain ATCC BAA-163 / DSM 7039 / HB27).